The chain runs to 114 residues: Large ribosomal subunit protein uL22 (114 aa).

This sequence belongs to the universal ribosomal protein uL22 family. As to quaternary structure, part of the 50S ribosomal subunit.

This protein binds specifically to 23S rRNA; its binding is stimulated by other ribosomal proteins, e.g. L4, L17, and L20. It is important during the early stages of 50S assembly. It makes multiple contacts with different domains of the 23S rRNA in the assembled 50S subunit and ribosome. Its function is as follows. The globular domain of the protein is located near the polypeptide exit tunnel on the outside of the subunit, while an extended beta-hairpin is found that lines the wall of the exit tunnel in the center of the 70S ribosome. This Desulfitobacterium hafniense (strain Y51) protein is Large ribosomal subunit protein uL22.